Here is a 137-residue protein sequence, read N- to C-terminus: Nucleoside diphosphate kinase (137 aa).

6 residues coordinate ATP: K9, F57, R85, T91, R102, and N112. Catalysis depends on H115, which acts as the Pros-phosphohistidine intermediate.

This sequence belongs to the NDK family. Homotetramer. Mg(2+) serves as cofactor.

The protein resides in the cytoplasm. The enzyme catalyses a 2'-deoxyribonucleoside 5'-diphosphate + ATP = a 2'-deoxyribonucleoside 5'-triphosphate + ADP. The catalysed reaction is a ribonucleoside 5'-diphosphate + ATP = a ribonucleoside 5'-triphosphate + ADP. Major role in the synthesis of nucleoside triphosphates other than ATP. The ATP gamma phosphate is transferred to the NDP beta phosphate via a ping-pong mechanism, using a phosphorylated active-site intermediate. In Campylobacter jejuni subsp. jejuni serotype O:6 (strain 81116 / NCTC 11828), this protein is Nucleoside diphosphate kinase.